A 585-amino-acid polypeptide reads, in one-letter code: Mycosin-5 (585 aa).

A signal peptide spans 1–39; that stretch reads MQRFGTGSSRSWCGRAGTATIAAVLLASGALTGLPPAYA. The Peptidase S8 domain occupies 83–521; that stretch reads PKYMEMLNLN…YGVVDPVAAL (439 aa). Active-site charge relay system residues include aspartate 109 and histidine 141. Positions 163 to 173 are enriched in low complexity; that stretch reads VPRRPVTIPTT. A disordered region spans residues 163–269; it reads VPRRPVTIPT…PALGPPPDAF (107 aa). Pro residues-rich tracts occupy residues 196–224 and 252–267; these read PAPP…PQPP and NPHP…PPPD. Serine 466 (charge relay system) is an active-site residue. A helical transmembrane segment spans residues 552-572; sequence VPIWVAAGGLAGALLIGGAVF.

This sequence belongs to the peptidase S8 family.

Its subcellular location is the cell membrane. This is Mycosin-5 from Mycobacterium tuberculosis (strain ATCC 25618 / H37Rv).